Here is a 124-residue protein sequence, read N- to C-terminus: Small ribosomal subunit protein uS12 (124 aa).

Residues 1–29 form a disordered region; that stretch reads MATINQLVRKGRKRRVAKSNVPALEASPQ. D89 carries the 3-methylthioaspartic acid modification. A disordered region spans residues 101–124; the sequence is AADTAGVDKRRQGRSKYGAKRPKS. Over residues 111–124 the composition is skewed to basic residues; sequence RQGRSKYGAKRPKS.

The protein belongs to the universal ribosomal protein uS12 family. In terms of assembly, part of the 30S ribosomal subunit. Contacts proteins S8 and S17. May interact with IF1 in the 30S initiation complex.

With S4 and S5 plays an important role in translational accuracy. Its function is as follows. Interacts with and stabilizes bases of the 16S rRNA that are involved in tRNA selection in the A site and with the mRNA backbone. Located at the interface of the 30S and 50S subunits, it traverses the body of the 30S subunit contacting proteins on the other side and probably holding the rRNA structure together. The combined cluster of proteins S8, S12 and S17 appears to hold together the shoulder and platform of the 30S subunit. The chain is Small ribosomal subunit protein uS12 from Alkalilimnicola ehrlichii (strain ATCC BAA-1101 / DSM 17681 / MLHE-1).